A 197-amino-acid polypeptide reads, in one-letter code: Regulator of free ubiquitin chains 1 (197 aa).

Belongs to the RFU1 family.

Its subcellular location is the endosome. Its function is as follows. Inhibitor of the DOA4 deubiquitinase involved in the regulation of protein degradation by the proteasome and maintenance of a normal level of free ubiquitin. The chain is Regulator of free ubiquitin chains 1 (RFU1) from Vanderwaltozyma polyspora (strain ATCC 22028 / DSM 70294 / BCRC 21397 / CBS 2163 / NBRC 10782 / NRRL Y-8283 / UCD 57-17) (Kluyveromyces polysporus).